The sequence spans 129 residues: Snaclec coagulation factor IX/factor X-binding protein subunit B3 (129 aa).

Positions 1–8 (LSLSGTAA) are cleaved as a signal peptide. Intrachain disulfides connect Cys10–Cys21, Cys38–Cys127, and Cys104–Cys119. Residues 17–128 (YEGHCYKPFN…CRMMANFVCE (112 aa)) form the C-type lectin domain.

This sequence belongs to the snaclec family. As to quaternary structure, heterodimer of subunits A and B3; disulfide-linked. In terms of tissue distribution, expressed by the venom gland.

It localises to the secreted. Anticoagulant protein which binds to the gamma-carboxyglutamic acid-domain regions of factors IX (F9) and factor X (F10) in the presence of calcium with a 1 to 1 stoichiometry. This chain is Snaclec coagulation factor IX/factor X-binding protein subunit B3, found in Trimeresurus stejnegeri (Chinese green tree viper).